Reading from the N-terminus, the 359-residue chain is Ribosomal RNA small subunit methyltransferase mra1 (359 aa).

Basic residues predominate over residues 1-10; it reads MPTYSKRKSR. Disordered regions lie at residues 1 to 62 and 98 to 118; these read MPTY…EDEE and VKSD…VKAR. Residue Ser12 is modified to Phosphoserine. Residues 18-39 are compositionally biased toward polar residues; that stretch reads KTNQPKFIKRSQSSETITSGET. At Thr33 the chain carries Phosphothreonine. Phosphoserine is present on Ser100. S-adenosyl-L-methionine-binding positions include Leu287, Gly314, 319-321, and 334-339; these read GPD and ISDYPL.

It belongs to the class IV-like SAM-binding methyltransferase superfamily. RNA methyltransferase NEP1 family. In terms of assembly, homodimer.

The protein localises to the nucleus. The protein resides in the nucleolus. The catalysed reaction is a pseudouridine in rRNA + S-adenosyl-L-methionine = an N(1)-methylpseudouridine in rRNA + S-adenosyl-L-homocysteine + H(+). S-adenosyl-L-methionine-dependent pseudouridine N(1)-methyltransferase that methylates the pseudouridine corresponding to position 1189 (Psi1189) in S.cerevisiae 18S rRNA. Involved the biosynthesis of the hypermodified N1-methyl-N3-(3-amino-3-carboxypropyl) pseudouridine (m1acp3-Psi) conserved in eukaryotic 18S rRNA. Also has an essential role in 40S ribosomal subunit biogenesis independent on its methyltransferase activity, facilitating the incorporation of ribosomal protein S19 during the formation of pre-ribosomes. Essential for cell growth. It also has a key role in promoting the mating function. The sequence is that of Ribosomal RNA small subunit methyltransferase mra1 from Schizosaccharomyces pombe (strain 972 / ATCC 24843) (Fission yeast).